The sequence spans 466 residues: CBL-interacting protein kinase 20 (466 aa).

Residues 12-276 (YELGRSLGHG…IDELVKHPWF (265 aa)) form the Protein kinase domain. ATP-binding positions include 18 to 26 (LGHGTFSKV) and lysine 41. Aspartate 139 serves as the catalytic Proton acceptor. The segment at 162–191 (DFGLSALSASRRHDGLLHTTCGTPSYVAPE) is activation loop. Residues 297–329 (KPANAAMNMKPASLNAFDIISLSQGFDLSGMFC) form the NAF domain. The PPI stretch occupies residues 337–366 (TQDQLFVTGKPATAIVSRLEEIAETEHFTV). A disordered region spans residues 446 to 466 (ASEKNQLPAVSEVSPLSSPRN).

It belongs to the protein kinase superfamily. CAMK Ser/Thr protein kinase family. SNF1 subfamily. The cofactor is Mn(2+).

It catalyses the reaction L-seryl-[protein] + ATP = O-phospho-L-seryl-[protein] + ADP + H(+). The catalysed reaction is L-threonyl-[protein] + ATP = O-phospho-L-threonyl-[protein] + ADP + H(+). Functionally, CIPK serine-threonine protein kinases interact with CBL proteins. Binding of a CBL protein to the regulatory NAF domain of CIPK protein lead to the activation of the kinase in a calcium-dependent manner. This chain is CBL-interacting protein kinase 20 (CIPK20), found in Oryza sativa subsp. japonica (Rice).